The following is a 463-amino-acid chain: MTHDTRSLYSQLSSIDSLLHQADIQTLVDGYGQTFIVEHLRKLQEEARIIIRQNNQLPQWHDNWAEELKNRIALQRKAAIKPVFNLTGTVLHTNLGRALMAESAIEAVSQVMRSPATLEYSLDGASRGHRDRAIADLLCELTGAEDACIVNNNAAAVLLMLATVAPDKEVVVSRGELVEIGGAFRIPDVMCQAGCRLKEVGTTNRTHLKDYRNAINENTGLLMKVHTSNYSIQGFTAEVEGTQLAALGKEMNLPTAIDLGSGSMTNLAALGLPSEPMPQDYLQQGIDLVTFSGDKLLGGPQAGIILGKKAWIEAIQHHPLKRALRVDKMTLAALDATLRLYQQPEKMIKDIPTLRLLTRTQTEIHDMAQRLLPHFQAYYGDNYHITISSCASQIGSGSLPIESLPSAALTFAAKDGKGSQLDALAAHWRNLEKPIIGRITDGRLWLDLRCLEDENALIQALSL.

At lysine 295 the chain carries N6-(pyridoxal phosphate)lysine.

It belongs to the SelA family. In terms of assembly, homodecamer; pentamer of dimers. Binds only one seryl-tRNA(Sec) per dimer. It depends on pyridoxal 5'-phosphate as a cofactor.

The protein resides in the cytoplasm. It carries out the reaction L-seryl-tRNA(Sec) + selenophosphate + H(+) = L-selenocysteinyl-tRNA(Sec) + phosphate. It functions in the pathway aminoacyl-tRNA biosynthesis; selenocysteinyl-tRNA(Sec) biosynthesis; selenocysteinyl-tRNA(Sec) from L-seryl-tRNA(Sec) (bacterial route): step 1/1. Converts seryl-tRNA(Sec) to selenocysteinyl-tRNA(Sec) required for selenoprotein biosynthesis. The chain is L-seryl-tRNA(Sec) selenium transferase from Proteus mirabilis (strain HI4320).